A 276-amino-acid polypeptide reads, in one-letter code: tRNA (guanine-N(7)-)-methyltransferase (276 aa).

The interval 1-36 (MAAETRNVAGAEAPPPQKRYYRQRAHSNPMADHTLR) is disordered. Alanine 2 carries the N-acetylalanine modification. Phosphoserine; by PKB/AKT1 and RPS6KA3 is present on serine 27. Residues glycine 84, glutamate 107, isoleucine 108, arginine 109, asparagine 140, alanine 141, and leucine 160 each coordinate S-adenosyl-L-homocysteine. S-adenosyl-L-methionine is bound by residues glycine 84 and glutamate 107. Arginine 109, asparagine 140, alanine 141, and leucine 160 together coordinate S-adenosyl-L-methionine. Aspartate 163 is a catalytic residue. The alphaC helix stretch occupies residues 164-172 (PHFKRTKHK). Residues threonine 238 and glutamate 240 each coordinate S-adenosyl-L-homocysteine. The S-adenosyl-L-methionine site is built by threonine 238 and glutamate 240. The segment at 238-246 (TEEGKKVLR) is alpha6 helix.

Belongs to the class I-like SAM-binding methyltransferase superfamily. TrmB family. Catalytic component of the METTL1-WDR4 complex, composed of METTL1 and WDR4. Post-translationally, phosphorylation at Ser-27 by PKB/AKT1 inactivates its methyltransferase activity via a steric interference mechanism in the active site that locally disrupts the catalytic center. Phosphorylation at Ser-27 does not affect the interaction with WDR4. As to expression, ubiquitous.

The protein resides in the nucleus. The catalysed reaction is guanosine(46) in tRNA + S-adenosyl-L-methionine = N(7)-methylguanosine(46) in tRNA + S-adenosyl-L-homocysteine. It carries out the reaction a guanosine in mRNA + S-adenosyl-L-methionine = an N(7)-methylguanosine in mRNA + S-adenosyl-L-homocysteine. The enzyme catalyses a guanosine in miRNA + S-adenosyl-L-methionine = an N(7)-methylguanosine in miRNA + S-adenosyl-L-homocysteine. Its pathway is tRNA modification; N(7)-methylguanine-tRNA biosynthesis. Catalytic component of METTL1-WDR4 methyltransferase complex that mediates the formation of N(7)-methylguanine in a subset of RNA species, such as tRNAs, mRNAs and microRNAs (miRNAs). Catalyzes the formation of N(7)-methylguanine at position 46 (m7G46) in a large subset of tRNAs that contain the 5'-RAGGU-3' motif within the variable loop. M7G46 interacts with C13-G22 in the D-loop to stabilize tRNA tertiary structure and protect tRNAs from decay. Also acts as a methyltransferase for a subset of internal N(7)-methylguanine in mRNAs. Internal N(7)-methylguanine methylation of mRNAs in response to stress promotes their relocalization to stress granules, thereby suppressing their translation. Also methylates a specific subset of miRNAs, such as let-7. N(7)-methylguanine methylation of let-7 miRNA promotes let-7 miRNA processing by disrupting an inhibitory secondary structure within the primary miRNA transcript (pri-miRNA). Acts as a regulator of embryonic stem cell self-renewal and differentiation. This is tRNA (guanine-N(7)-)-methyltransferase from Homo sapiens (Human).